A 437-amino-acid chain; its full sequence is Phosphomethylpyrimidine synthase (437 aa).

Substrate-binding positions include Asn69, Met98, Tyr127, His163, 185 to 187 (SRG), 226 to 229 (DACR), and Glu265. Zn(2+) is bound at residue His269. Tyr292 serves as a coordination point for substrate. Residue His333 coordinates Zn(2+). Residues Cys409, Cys412, and Cys416 each coordinate [4Fe-4S] cluster.

Belongs to the ThiC family. It depends on [4Fe-4S] cluster as a cofactor.

The enzyme catalyses 5-amino-1-(5-phospho-beta-D-ribosyl)imidazole + S-adenosyl-L-methionine = 4-amino-2-methyl-5-(phosphooxymethyl)pyrimidine + CO + 5'-deoxyadenosine + formate + L-methionine + 3 H(+). It functions in the pathway cofactor biosynthesis; thiamine diphosphate biosynthesis. In terms of biological role, catalyzes the synthesis of the hydroxymethylpyrimidine phosphate (HMP-P) moiety of thiamine from aminoimidazole ribotide (AIR) in a radical S-adenosyl-L-methionine (SAM)-dependent reaction. The polypeptide is Phosphomethylpyrimidine synthase (Alkaliphilus metalliredigens (strain QYMF)).